The sequence spans 730 residues: Meiotically up-regulated gene 70 protein (730 aa).

Residues 1-27 are disordered; that stretch reads MTVGTLSVVSSTASDTASHVSDTRKRQ. Over residues 7–20 the composition is skewed to low complexity; the sequence is SVVSSTASDTASHV. CBS domains lie at 69–127, 135–200, 263–319, and 328–385; these read ALDP…LNAR, MSTS…RIAR, SSEE…GLDP, and MTPH…PEEE. Transmembrane regions (helical) follow at residues 290–310 and 358–378; these read AVLV…DVVL and VVDE…ATAI. Residues 420 to 517 form a disordered region; the sequence is ENYDVNPPLP…ENGSNSFAAS (98 aa). Composition is skewed to polar residues over residues 458–470 and 480–515; these read AWQN…NNKP and YNFS…NSFA. Residues 572–649 enclose the PB1 domain; the sequence is PSQFTIKYRS…ARRRGLPRLE (78 aa). The chain crosses the membrane as a helical span at residues 706 to 726; that stretch reads PIYIGIVSSSIVILAVSMWYL.

It localises to the cytoplasm. Its subcellular location is the nucleus membrane. In terms of biological role, has a role in meiosis. This Schizosaccharomyces pombe (strain 972 / ATCC 24843) (Fission yeast) protein is Meiotically up-regulated gene 70 protein (mug70).